The primary structure comprises 185 residues: Inner membrane-spanning protein YciB (185 aa).

5 helical membrane passes run 27-47 (IVLVVATILQIVILKWKYGIV), 53-73 (IMASAVVFFGLLTAYFNEIRY), 76-96 (WKVTIINGLFAIVLLVAQFQF), 118-138 (TLNLGWALFFIICMLVNIYIS), and 149-169 (FKSFGIIGMTVIATIISGVYI).

Belongs to the YciB family.

The protein resides in the cell inner membrane. Plays a role in cell envelope biogenesis, maintenance of cell envelope integrity and membrane homeostasis. The polypeptide is Inner membrane-spanning protein YciB (Haemophilus influenzae (strain 86-028NP)).